The following is a 147-amino-acid chain: Small ribosomal subunit protein bS6 (147 aa).

The interval 96–147 is disordered; it reads VTEPSPMMKAKEERFTKRDDREERSDRSEAPRAEAPAKAEAPAKAEDEAAAE. Over residues 104-147 the composition is skewed to basic and acidic residues; it reads KAKEERFTKRDDREERSDRSEAPRAEAPAKAEAPAKAEDEAAAE.

This sequence belongs to the bacterial ribosomal protein bS6 family.

Binds together with bS18 to 16S ribosomal RNA. This Photobacterium profundum (strain SS9) protein is Small ribosomal subunit protein bS6.